Here is a 311-residue protein sequence, read N- to C-terminus: Porphobilinogen deaminase (311 aa).

C242 bears the S-(dipyrrolylmethanemethyl)cysteine mark.

Belongs to the HMBS family. As to quaternary structure, monomer. It depends on dipyrromethane as a cofactor.

It catalyses the reaction 4 porphobilinogen + H2O = hydroxymethylbilane + 4 NH4(+). Its pathway is porphyrin-containing compound metabolism; protoporphyrin-IX biosynthesis; coproporphyrinogen-III from 5-aminolevulinate: step 2/4. Tetrapolymerization of the monopyrrole PBG into the hydroxymethylbilane pre-uroporphyrinogen in several discrete steps. This is Porphobilinogen deaminase (hemC) from Vibrio cholerae serotype O1 (strain ATCC 39315 / El Tor Inaba N16961).